Here is a 382-residue protein sequence, read N- to C-terminus: Succinyl-diaminopimelate desuccinylase (382 aa).

His71 contributes to the Zn(2+) binding site. Residue Asp73 is part of the active site. Asp105 contributes to the Zn(2+) binding site. Glu139 functions as the Proton acceptor in the catalytic mechanism. Zn(2+)-binding residues include Glu140, Glu168, and His354.

The protein belongs to the peptidase M20A family. DapE subfamily. Homodimer. Zn(2+) serves as cofactor. Co(2+) is required as a cofactor.

The catalysed reaction is N-succinyl-(2S,6S)-2,6-diaminopimelate + H2O = (2S,6S)-2,6-diaminopimelate + succinate. It functions in the pathway amino-acid biosynthesis; L-lysine biosynthesis via DAP pathway; LL-2,6-diaminopimelate from (S)-tetrahydrodipicolinate (succinylase route): step 3/3. Its function is as follows. Catalyzes the hydrolysis of N-succinyl-L,L-diaminopimelic acid (SDAP), forming succinate and LL-2,6-diaminopimelate (DAP), an intermediate involved in the bacterial biosynthesis of lysine and meso-diaminopimelic acid, an essential component of bacterial cell walls. The chain is Succinyl-diaminopimelate desuccinylase from Stutzerimonas stutzeri (strain A1501) (Pseudomonas stutzeri).